The primary structure comprises 110 residues: Suppressor of silencing 2b (110 aa).

The segment at 16–45 (ARMVEAKKQRRRSHKQNRRERGHKSPSERA) is disordered. A Nuclear localization signal motif is present at residues 22–27 (KKQRRR). The segment covering 23 to 37 (KQRRRSHKQNRRERG) has biased composition (basic residues).

It belongs to the cucumovirus/ilarvirus protein 2b family. In terms of assembly, homotetramer. Interacts with host AGO1; this interaction blocks AGO1 cleavage activity to attenuate RNA silencing and thus counter host defense. Interacts with host JAZ.

The protein localises to the host nucleus. Its function is as follows. Multifunctional protein that plays two independent roles: viral suppressor of host RNAi (VSR) and viral inducer of host attractiveness to insect vectors (VIA). Acts as a suppressor of RNA-mediated gene silencing, also known as post-transcriptional gene silencing (PTGS), a mechanism of plant viral defense that limits the accumulation of viral RNAs. May directly interfere with mobile silencing signaling. Also inhibits signal transduction by the phytohormone jasmonate, making the infected plant more attractive to aphids, which are the second host to play a role as a dissemination vector. Acts by binding to and inhibiting JAZ degradation in the host. This is Suppressor of silencing 2b from Cucurbita pepo (Vegetable marrow).